The sequence spans 150 residues: UPF0098 protein CPn_0877/CP_0992/CPj0877/CpB0906 (150 aa).

It belongs to the UPF0098 family.

In Chlamydia pneumoniae (Chlamydophila pneumoniae), this protein is UPF0098 protein CPn_0877/CP_0992/CPj0877/CpB0906.